The following is a 101-amino-acid chain: NAD(P)H-quinone oxidoreductase subunit 4L, chloroplastic (101 aa).

A run of 3 helical transmembrane segments spans residues 2–22 (ILEH…YGLI), 32–52 (MCLE…SDFF), and 61–81 (IFSI…PAIL).

This sequence belongs to the complex I subunit 4L family. As to quaternary structure, NDH is composed of at least 16 different subunits, 5 of which are encoded in the nucleus.

The protein resides in the plastid. It localises to the chloroplast thylakoid membrane. It catalyses the reaction a plastoquinone + NADH + (n+1) H(+)(in) = a plastoquinol + NAD(+) + n H(+)(out). The catalysed reaction is a plastoquinone + NADPH + (n+1) H(+)(in) = a plastoquinol + NADP(+) + n H(+)(out). Functionally, NDH shuttles electrons from NAD(P)H:plastoquinone, via FMN and iron-sulfur (Fe-S) centers, to quinones in the photosynthetic chain and possibly in a chloroplast respiratory chain. The immediate electron acceptor for the enzyme in this species is believed to be plastoquinone. Couples the redox reaction to proton translocation, and thus conserves the redox energy in a proton gradient. This chain is NAD(P)H-quinone oxidoreductase subunit 4L, chloroplastic, found in Platanus occidentalis (Sycamore).